Consider the following 74-residue polypeptide: Putative membrane protein insertion efficiency factor (74 aa).

Belongs to the UPF0161 family.

It is found in the cell inner membrane. Could be involved in insertion of integral membrane proteins into the membrane. The polypeptide is Putative membrane protein insertion efficiency factor (Endomicrobium trichonymphae).